A 730-amino-acid polypeptide reads, in one-letter code: Zinc finger protein 615 (730 aa).

Residues 7–78 (LTLEDVAVDF…EDEIYSRICF (72 aa)) enclose the KRAB domain. 19 C2H2-type zinc fingers span residues 203–225 (HVCSECGKAFLKLSQFIDHQRVH), 231–253 (HVCSMCGKAFSRKSRLMDHQRTH), 259–281 (YECTECDKTFLKKSQLNIHQKTH), 287–309 (YTCSECGKAFIKKCRLIYHQRTH), 315–337 (HGCSVCGKAFSTKFSLTTHQKTH), 343–365 (YICSECGKGFIEKRRLIAHHRTH), 371–393 (FICNKCGKGFTLKNSLITHQQTH), 399–421 (YTCSECGKGFSMKHCLMVHQRTH), 427–449 (YKCNECGKGFALKSPLIRHQRTH), 455–477 (YVCTECRKGFTMKSDLIVHQRTH), 483–505 (YICNDCGKGFTVKSRLIVHQRTH), 511–533 (YVCGECGKGFPAKIRLMGHQRTH), 539–561 (YICDECGKGFTEKSHLNVHRRTH), 567–589 (YVCSECGKGLTGKSMLIAHQRTH), 595–617 (YICNECGKGFTMKSTLSIHQQTH), 623–645 (YKCNECDKSFRKKTCLIQHQRFH), 651–673 (FACTECGKFSLRKNDLITHQRIH), 679–701 (YKCSDCGKAFTTKSGLNVHQRKH), and 707–729 (YGCSDCGKAFAHLSILVKHKRIH).

It belongs to the krueppel C2H2-type zinc-finger protein family.

It localises to the nucleus. May be involved in transcriptional regulation. In Pongo abelii (Sumatran orangutan), this protein is Zinc finger protein 615 (ZNF615).